The primary structure comprises 361 residues: Outer membrane protein P2 (361 aa).

Positions 1 to 20 (MKKTLAALIVGAFAASAANA) are cleaved as a signal peptide.

Belongs to the Gram-negative porin family. Homotrimer.

It is found in the cell outer membrane. Forms pores that allow passive diffusion of small molecules across the outer membrane. This chain is Outer membrane protein P2 (ompP2), found in Haemophilus influenzae.